The sequence spans 237 residues: Demethylmenaquinone methyltransferase (237 aa).

S-adenosyl-L-methionine contacts are provided by residues Thr-58, Asp-79, and 107 to 108 (NA).

It belongs to the class I-like SAM-binding methyltransferase superfamily. MenG/UbiE family.

It carries out the reaction a 2-demethylmenaquinol + S-adenosyl-L-methionine = a menaquinol + S-adenosyl-L-homocysteine + H(+). It participates in quinol/quinone metabolism; menaquinone biosynthesis; menaquinol from 1,4-dihydroxy-2-naphthoate: step 2/2. Methyltransferase required for the conversion of demethylmenaquinol (DMKH2) to menaquinol (MKH2). This chain is Demethylmenaquinone methyltransferase, found in Lactiplantibacillus plantarum (strain ATCC BAA-793 / NCIMB 8826 / WCFS1) (Lactobacillus plantarum).